Consider the following 226-residue polypeptide: Exosome complex component Rrp4 (226 aa).

One can recognise an S1 motif domain in the interval 61–135 (NDLVIGKVNS…RDPLVSISDR (75 aa)). The KH domain maps to 141-200 (DSGVLMEISPSKVPRLIGKKGSMIQMIEEATDAAVTIGQNGWVVVSCESPEGLLKAKKAI).

This sequence belongs to the RRP4 family. In terms of assembly, component of the archaeal exosome complex. Forms a trimer of Rrp4 and/or Csl4 subunits. The trimer associates with a hexameric ring-like arrangement composed of 3 Rrp41-Rrp42 heterodimers.

The protein resides in the cytoplasm. Functionally, non-catalytic component of the exosome, which is a complex involved in RNA degradation. Increases the RNA binding and the efficiency of RNA degradation. Confers strong poly(A) specificity to the exosome. The chain is Exosome complex component Rrp4 from Nitrosopumilus maritimus (strain SCM1).